We begin with the raw amino-acid sequence, 80 residues long: U1-nemetoxin-Csp1a (80 aa).

Positions 1–20 (MKYFVVFCVLIIAVAAFTSA) are cleaved as a signal peptide. Residues 21–41 (AEDGEVFEENPLEFPKTIQKR) constitute a propeptide that is removed on maturation. Cystine bridges form between Cys42-Cys56, Cys49-Cys60, Cys55-Cys77, and Cys66-Cys73.

Belongs to the neurotoxin 13 (insecticidal toxin ABC) family. 02 (Calisoga) subfamily. Expressed by the venom gland.

It is found in the secreted. In terms of biological role, causes paralysis to insect larvae (H.virescens). This toxin is active only on insects. This chain is U1-nemetoxin-Csp1a, found in Calisoga sp. (Spider).